A 475-amino-acid polypeptide reads, in one-letter code: Aspartyl/glutamyl-tRNA(Asn/Gln) amidotransferase subunit B (475 aa).

Belongs to the GatB/GatE family. GatB subfamily. As to quaternary structure, heterotrimer of A, B and C subunits.

The catalysed reaction is L-glutamyl-tRNA(Gln) + L-glutamine + ATP + H2O = L-glutaminyl-tRNA(Gln) + L-glutamate + ADP + phosphate + H(+). It catalyses the reaction L-aspartyl-tRNA(Asn) + L-glutamine + ATP + H2O = L-asparaginyl-tRNA(Asn) + L-glutamate + ADP + phosphate + 2 H(+). Allows the formation of correctly charged Asn-tRNA(Asn) or Gln-tRNA(Gln) through the transamidation of misacylated Asp-tRNA(Asn) or Glu-tRNA(Gln) in organisms which lack either or both of asparaginyl-tRNA or glutaminyl-tRNA synthetases. The reaction takes place in the presence of glutamine and ATP through an activated phospho-Asp-tRNA(Asn) or phospho-Glu-tRNA(Gln). This Bacillus mycoides (strain KBAB4) (Bacillus weihenstephanensis) protein is Aspartyl/glutamyl-tRNA(Asn/Gln) amidotransferase subunit B.